The primary structure comprises 360 residues: Phospho-N-acetylmuramoyl-pentapeptide-transferase (360 aa).

The next 10 helical transmembrane spans lie at 27–47, 71–91, 93–113, 128–148, 168–188, 199–219, 239–259, 262–282, 288–308, and 337–357; these read GAMITSALIVFLFGPTIINSL, TPTMGGLMIMTGILASCLLWA, LASVYVWVVLMVSVGFGAIGF, FSGKARLGIEFLIAAIAAFTI, LVINLSWFFIPFAAFVMVGAG, GLAIVPVMVAAASFGFIAYLS, LAVVLGAVIGAGLGFLWFNAP, AIFMGDTGSLALGGMLGTVAV, IVLAIIGGLFVMEALSVIIQV, and QVVIRFWIVAIILAMIGLSTL.

The protein belongs to the glycosyltransferase 4 family. MraY subfamily. Mg(2+) is required as a cofactor.

The protein localises to the cell inner membrane. It carries out the reaction UDP-N-acetyl-alpha-D-muramoyl-L-alanyl-gamma-D-glutamyl-meso-2,6-diaminopimeloyl-D-alanyl-D-alanine + di-trans,octa-cis-undecaprenyl phosphate = di-trans,octa-cis-undecaprenyl diphospho-N-acetyl-alpha-D-muramoyl-L-alanyl-D-glutamyl-meso-2,6-diaminopimeloyl-D-alanyl-D-alanine + UMP. It participates in cell wall biogenesis; peptidoglycan biosynthesis. Functionally, catalyzes the initial step of the lipid cycle reactions in the biosynthesis of the cell wall peptidoglycan: transfers peptidoglycan precursor phospho-MurNAc-pentapeptide from UDP-MurNAc-pentapeptide onto the lipid carrier undecaprenyl phosphate, yielding undecaprenyl-pyrophosphoryl-MurNAc-pentapeptide, known as lipid I. In Brucella abortus (strain S19), this protein is Phospho-N-acetylmuramoyl-pentapeptide-transferase.